The following is a 292-amino-acid chain: 4-hydroxy-tetrahydrodipicolinate synthase (292 aa).

Threonine 45 contributes to the pyruvate binding site. Tyrosine 133 serves as the catalytic Proton donor/acceptor. Lysine 161 functions as the Schiff-base intermediate with substrate in the catalytic mechanism. Position 203 (isoleucine 203) interacts with pyruvate.

This sequence belongs to the DapA family. Homotetramer; dimer of dimers.

It is found in the cytoplasm. It carries out the reaction L-aspartate 4-semialdehyde + pyruvate = (2S,4S)-4-hydroxy-2,3,4,5-tetrahydrodipicolinate + H2O + H(+). Its pathway is amino-acid biosynthesis; L-lysine biosynthesis via DAP pathway; (S)-tetrahydrodipicolinate from L-aspartate: step 3/4. In terms of biological role, catalyzes the condensation of (S)-aspartate-beta-semialdehyde [(S)-ASA] and pyruvate to 4-hydroxy-tetrahydrodipicolinate (HTPA). In Dechloromonas aromatica (strain RCB), this protein is 4-hydroxy-tetrahydrodipicolinate synthase.